The primary structure comprises 314 residues: NF-kappa-B inhibitor alpha (314 aa).

The segment at 1–39 (MFQPAGHGQDWAMEGPRDGLKKERLVDDRHDSGLDSMKD) is disordered. Basic and acidic residues predominate over residues 15–39 (GPRDGLKKERLVDDRHDSGLDSMKD). Residue Lys-21 forms a Glycyl lysine isopeptide (Lys-Gly) (interchain with G-Cter in SUMO); alternate linkage. Lys-21 participates in a covalent cross-link: Glycyl lysine isopeptide (Lys-Gly) (interchain with G-Cter in ubiquitin); alternate. Residue Lys-22 forms a Glycyl lysine isopeptide (Lys-Gly) (interchain with G-Cter in ubiquitin) linkage. Positions 30–36 (HDSGLDS) match the Destruction motif motif. A Phosphoserine; by IKKA and IKKB modification is found at Ser-32. Ser-36 carries the phosphoserine; by IKKA, IKKB, IKKE and TBK1 modification. Tyr-42 bears the Phosphotyrosine; by Tyr-kinases mark. Residues 45–54 (MVKELREIRL) carry the Nuclear export signal motif. A Nuclear import signal motif is present at residues 110–120 (LQQTPLHLAVI). ANK repeat units lie at residues 110 to 139 (LQQT…DPEL), 143 to 172 (RGNT…PQHL), 182 to 211 (NGHT…DVNA), and 216 to 245 (NGRT…DVNR). Residues Asn-210 and Asn-244 each carry the (3S)-3-hydroxyasparagine; by HIF1AN modification. Ser-283 and Ser-288 each carry phosphoserine; by CK2. Thr-291 is subject to Phosphothreonine; by CK2. Ser-293 is subject to Phosphoserine; by CK2. A Phosphothreonine modification is found at Thr-296.

Belongs to the NF-kappa-B inhibitor family. As to quaternary structure, interacts with RELA; the interaction requires the nuclear import signal. Part of a 70-90 kDa complex at least consisting of CHUK, IKBKB, NFKBIA, RELA, ELP1 and MAP3K14. Interacts with NKIRAS1 and NKIRAS2. Interacts with RWDD3; the interaction enhances sumoylation. Interacts with PRMT2. Interacts with PRKACA in platelets; this interaction is disrupted by thrombin and collagen. Interacts with MEFV. Interacts with DDRGK1; positively regulates NFKBIA phosphorylation and degradation. Interacts with HNRNPA2B1; the interaction may be mediated by the RRM2 domain of HNRNPA2B1, and HNRNPA2B1 may interact simultaneously with FAM76B and either NFKBIA or NFKBIE to form a complex. Phosphorylated at Ser-32 and Ser-36 by IKKA/CHUK and IKKB/IKBKB; disables inhibition of NF-kappa-B DNA-binding activity. Phosphorylation at positions 32 and 36 is prerequisite to recognition by the SCF(FBXW11) and SCF(BTRC) complexes, leading to polyubiquitination and subsequent degradation. In terms of processing, polyubiquitinated at Lys-21 and/or Lys-22 following phosphorylation at Ser-32 and Ser-36. Monoubiquitinated at Lys-21 and/or Lys-22 by UBE2D3. Ubiquitin chain elongation is then performed by CDC34 in cooperation with the SCF(FBXW11) E3 ligase complex, building ubiquitin chains from the UBE2D3-primed NFKBIA-linked ubiquitin. The resulting polyubiquitination leads to protein degradation. Also ubiquitinated by the SCF(BTRC) complex following stimulus-dependent phosphorylation at Ser-32 and Ser-36. Deubiquitinated by USP38, leading to NF-kappa-B inhibition. Post-translationally, sumoylated; sumoylation requires the presence of the nuclear import signal. Sumoylation blocks ubiquitination and proteasome-mediated degradation of the protein thereby increasing the protein stability. Hydroxylated by HIF1AN.

The protein localises to the cytoplasm. It is found in the nucleus. In terms of biological role, inhibits the activity of dimeric NF-kappa-B/REL complexes by trapping REL (RELA/p65 and NFKB1/p50) dimers in the cytoplasm by masking their nuclear localization signals. On cellular stimulation by immune and pro-inflammatory responses, becomes phosphorylated promoting ubiquitination and degradation, enabling the dimeric RELA to translocate to the nucleus and activate transcription. In Rattus norvegicus (Rat), this protein is NF-kappa-B inhibitor alpha (Nfkbia).